The chain runs to 778 residues: Hyperosmolality-gated Ca2+ permeable channel 1.4 (778 aa).

The next 10 helical transmembrane spans lie at Ile-7–Ile-27, Ile-101–Val-121, Phe-158–Lys-178, Phe-375–Val-395, Phe-427–Met-447, Tyr-467–Glu-487, Ala-512–Phe-532, Pro-584–Phe-604, Val-626–Ser-646, and Val-651–Cys-671. The tract at residues Val-738–Thr-778 is disordered. Positions Ser-753 to Ser-763 are enriched in low complexity.

The protein belongs to the CSC1 (TC 1.A.17) family.

Its subcellular location is the membrane. Functionally, acts as an osmosensitive calcium-permeable cation channel. In Arabidopsis thaliana (Mouse-ear cress), this protein is Hyperosmolality-gated Ca2+ permeable channel 1.4.